The chain runs to 61 residues: Photosystem II reaction center protein K (61 aa).

Positions 1 to 24 (MPNILSLTCICFNSVLCPTSFFFA) are excised as a propeptide. Residues 32-52 (IFNPIVDVMPVIPVLFFLLAF) traverse the membrane as a helical segment.

The protein belongs to the PsbK family. As to quaternary structure, PSII is composed of 1 copy each of membrane proteins PsbA, PsbB, PsbC, PsbD, PsbE, PsbF, PsbH, PsbI, PsbJ, PsbK, PsbL, PsbM, PsbT, PsbX, PsbY, PsbZ, Psb30/Ycf12, at least 3 peripheral proteins of the oxygen-evolving complex and a large number of cofactors. It forms dimeric complexes.

The protein localises to the plastid. It localises to the chloroplast thylakoid membrane. In terms of biological role, one of the components of the core complex of photosystem II (PSII). PSII is a light-driven water:plastoquinone oxidoreductase that uses light energy to abstract electrons from H(2)O, generating O(2) and a proton gradient subsequently used for ATP formation. It consists of a core antenna complex that captures photons, and an electron transfer chain that converts photonic excitation into a charge separation. The polypeptide is Photosystem II reaction center protein K (Sorghum bicolor (Sorghum)).